Consider the following 715-residue polypeptide: Polyribonucleotide nucleotidyltransferase (715 aa).

The Mg(2+) site is built by D487 and D493. In terms of domain architecture, KH spans 554–613 (PRIETFKIATDKIREVIGTGGKVIREIVEKTGAKVNIDDDGTVKVASSDGESIKAAIKWI). An S1 motif domain is found at 623–691 (NAIYDGTVVK…DRGKTRLSMK (69 aa)). The segment at 696–715 (ETGEDLEAKQKAAEGATAAE) is disordered.

This sequence belongs to the polyribonucleotide nucleotidyltransferase family. Mg(2+) is required as a cofactor.

The protein localises to the cytoplasm. It catalyses the reaction RNA(n+1) + phosphate = RNA(n) + a ribonucleoside 5'-diphosphate. Its function is as follows. Involved in mRNA degradation. Catalyzes the phosphorolysis of single-stranded polyribonucleotides processively in the 3'- to 5'-direction. This chain is Polyribonucleotide nucleotidyltransferase, found in Rhodopseudomonas palustris (strain BisB18).